Reading from the N-terminus, the 144-residue chain is Maximins 11/H11 (144 aa).

A signal peptide spans 1–18; the sequence is MNFKYIVAVSFLIASAYA. Residues 19 to 43 constitute a propeptide that is removed on maturation; it reads RSEENDEQSLSQRDVLEEESLREIR. N70 is subject to Asparagine amide. A propeptide spanning residues 74-123 is cleaved from the precursor; sequence TAEDHEVMKRLEAVMRDLDSLDYPEEASERETRGFNQEEIANLFTKKEKR. Residue I143 is modified to Isoleucine amide.

This sequence belongs to the bombinin family. In terms of tissue distribution, expressed by the skin glands.

The protein resides in the secreted. Its function is as follows. Maximin-11 shows antimicrobial activity against bacteria and against the fungus C.albicans. It has little hemolytic activity. In terms of biological role, maximin-H11 shows antimicrobial activity against bacteria and against the fungus C.albicans. Shows strong hemolytic activity. The polypeptide is Maximins 11/H11 (Bombina maxima (Giant fire-bellied toad)).